We begin with the raw amino-acid sequence, 306 residues long: Ribonuclease Z (306 aa).

Residues histidine 63, histidine 65, aspartate 67, histidine 68, histidine 140, aspartate 211, and histidine 269 each coordinate Zn(2+). The Proton acceptor role is filled by aspartate 67.

Belongs to the RNase Z family. As to quaternary structure, homodimer. It depends on Zn(2+) as a cofactor.

The catalysed reaction is Endonucleolytic cleavage of RNA, removing extra 3' nucleotides from tRNA precursor, generating 3' termini of tRNAs. A 3'-hydroxy group is left at the tRNA terminus and a 5'-phosphoryl group is left at the trailer molecule.. In terms of biological role, zinc phosphodiesterase, which displays some tRNA 3'-processing endonuclease activity. Probably involved in tRNA maturation, by removing a 3'-trailer from precursor tRNA. The protein is Ribonuclease Z of Listeria innocua serovar 6a (strain ATCC BAA-680 / CLIP 11262).